The sequence spans 31 residues: Cycloviolacin-O19 (31 aa).

Positions 1–31 (GTLPCGESCVWIPCISSVVGCSCKSKVCYKD) form a cross-link, cyclopeptide (Gly-Asp). Disulfide bonds link cysteine 5–cysteine 21, cysteine 9–cysteine 23, and cysteine 14–cysteine 28.

This is a cyclic peptide. Expressed in petioles and runners but not in leaves, petals and roots (at protein level).

Functionally, probably participates in a plant defense mechanism. This is Cycloviolacin-O19 from Viola odorata (Sweet violet).